A 216-amino-acid polypeptide reads, in one-letter code: Transmembrane emp24 domain-containing protein p24delta5 (216 aa).

The N-terminal stretch at 1–27 is a signal peptide; that stretch reads MAINRIAHGSLFLTVVLFFLTVNYGEA. The Lumenal segment spans residues 28–183; the sequence is IWLTIPTTGG…REVSETTNSR (156 aa). The GOLD domain occupies 38-151; the sequence is TKCVSEEIQS…IEGVELQLRR (114 aa). Asparagine 86 carries an N-linked (GlcNAc...) asparagine glycan. A coiled-coil region spans residues 137–159; sequence AKKEKIEGVELQLRRLEGLVLSI. Arginine 169 and arginine 174 each carry omega-N-methylated arginine. Residues 184–204 form a helical membrane-spanning segment; the sequence is VAWFSIMSLGVCVVVVGSQIL. Residues 205-216 lie on the Cytoplasmic side of the membrane; sequence YLKRYFHKKKLI. Residues 209 to 210 carry the COPII vesicle coat-binding motif; that stretch reads YF. A COPI vesicle coat-binding motif is present at residues 209 to 216; the sequence is YFHKKKLI.

The protein belongs to the EMP24/GP25L family. Probably oligomerizes with other members of the EMP24/GP25L family. Associates with the COPI vesicle coat (coatomer). Associates with the COPII vesicle coat (coatomer). Interacts with p24beta2.

The protein resides in the endoplasmic reticulum membrane. Involved in vesicular protein trafficking. Mainly functions in the early secretory pathway. Thought to act as cargo receptor at the lumenal side for incorporation of secretory cargo molecules into transport vesicles and to be involved in vesicle coat formation at the cytoplasmic side. Interacts with p24beta2 at endoplasmic reticulum export sites for endoplasmic reticulum exit and coupled transport to the Golgi apparatus. Once in the Golgi, interacts very efficiently with the COPI machinery for retrograde transport back to the endoplasmic reticulum. The chain is Transmembrane emp24 domain-containing protein p24delta5 from Arabidopsis thaliana (Mouse-ear cress).